The following is a 1015-amino-acid chain: SKI family transcriptional corepressor 2 (1015 aa).

Disordered stretches follow at residues 280–316 (HLLGAPPPPPPPPPPLAELAGAPHAHHKRPRFDDDDD) and 518–934 (GAAG…KKDV). Pro residues predominate over residues 284 to 295 (APPPPPPPPPPL). Positions 575 to 600 (PPADSVAAAGAGAAAAGSGPAGSRVP) are enriched in low complexity. The span at 628–637 (GGKDDAESLA) shows a compositional bias: basic and acidic residues. The span at 653 to 669 (HPHHHHHPHHHHHHHHP) shows a compositional bias: basic residues. 2 stretches are compositionally biased toward pro residues: residues 670-684 (PQPPSPLLLLPPQPD) and 694-708 (APPPPPPPPPPPPLA). Acidic residues-rich tracts occupy residues 730-745 (DSSEDEDDEEEEQEVD) and 754-774 (GEEEEEGRDPDDDEEEDEETE). Residues 793-803 (PSEKGSSRDRA) show a composition bias toward basic and acidic residues. Residues 832–842 (DLPPPPPPPLA) show a composition bias toward pro residues. 3 stretches are compositionally biased toward basic and acidic residues: residues 861–877 (PSLEEQPSYKDSQKTKE), 885–899 (TKDDNSFSDKNKEHS), and 912–922 (FWRERSGEHTQ).

This sequence belongs to the SKI family. In terms of assembly, interacts with SMAD2 and SMAD3. As to expression, expressed in cerebellum, spinal cord and testis. Isoform 2 is present in cerebellum (at protein level).

It localises to the nucleus. The protein localises to the cytoplasm. Functionally, exhibits transcriptional repressor activity. Acts as a TGF-beta antagonist in the nervous system. This Homo sapiens (Human) protein is SKI family transcriptional corepressor 2.